The chain runs to 133 residues: Type III secretion protein HrcQb (133 aa).

Residues 1-21 (MSTEDLYQDDVEMLDDYEEPV) show a composition bias toward acidic residues. Residues 1–60 (MSTEDLYQDDVEMLDDYEEPVPEQADQQQRDDEYAEHAFGYADSDAEHEEQSGDHHESPM) are disordered. Over residues 49–59 (EEQSGDHHESP) the composition is skewed to basic and acidic residues.

This sequence belongs to the FliN/MopA/SpaO family. Homotetramer. The four monomers assemble into two tightly bound homodimers. Interacts with HrcQa.

The protein resides in the cytoplasm. Functionally, component of the type III secretion system, which is required for effector protein delivery, parasitism, and pathogenicity. Probably participates in the formation of a C-ring-like assembly along with HrcQa. The sequence is that of Type III secretion protein HrcQb (hrcQb) from Pseudomonas syringae pv. syringae.